The primary structure comprises 69 residues: Cell division protein ZapB (69 aa).

Residues 6-68 adopt a coiled-coil conformation; sequence LEQLEARVQS…LGKMDQMNSE (63 aa).

Belongs to the ZapB family. In terms of assembly, homodimer. The ends of the coiled-coil dimer bind to each other, forming polymers. Interacts with FtsZ.

It is found in the cytoplasm. Its function is as follows. Non-essential, abundant cell division factor that is required for proper Z-ring formation. It is recruited early to the divisome by direct interaction with FtsZ, stimulating Z-ring assembly and thereby promoting cell division earlier in the cell cycle. Its recruitment to the Z-ring requires functional FtsA or ZipA. In Tolumonas auensis (strain DSM 9187 / NBRC 110442 / TA 4), this protein is Cell division protein ZapB.